The sequence spans 446 residues: Mitochondrial distribution and morphology protein 12 (446 aa).

The SMP-LTD domain occupies 1-446; that stretch reads MSIDINWEAA…VYPSFWTFLV (446 aa). Residues 75-85 are compositionally biased toward acidic residues; the sequence is DNEIGDGEVSD. Disordered stretches follow at residues 75–106, 126–145, and 188–283; these read DNEI…SAAD, PHDV…PIRS, and TPLS…RVRE. Basic and acidic residues predominate over residues 126–138; sequence PHDVPIPSKEDPL. The segment covering 233–246 has biased composition (polar residues); that stretch reads TGNSRPSTADTLDS. Positions 260 to 274 are enriched in basic and acidic residues; the sequence is SSDDAHPNVLPRRDN.

The protein belongs to the MDM12 family. In terms of assembly, component of the ER-mitochondria encounter structure (ERMES) or MDM complex, composed of MMM1, MDM10, MDM12 and MDM34. An MMM1 homodimer associates with one molecule of MDM12 on each side in a pairwise head-to-tail manner, and the SMP-LTD domains of MMM1 and MDM12 generate a continuous hydrophobic tunnel for phospholipid trafficking.

Its subcellular location is the mitochondrion outer membrane. The protein localises to the endoplasmic reticulum membrane. Its function is as follows. Component of the ERMES/MDM complex, which serves as a molecular tether to connect the endoplasmic reticulum (ER) and mitochondria. Components of this complex are involved in the control of mitochondrial shape and protein biogenesis, and function in nonvesicular lipid trafficking between the ER and mitochondria. MDM12 is required for the interaction of the ER-resident membrane protein MMM1 and the outer mitochondrial membrane-resident beta-barrel protein MDM10. The MDM12-MMM1 subcomplex functions in the major beta-barrel assembly pathway that is responsible for biogenesis of all mitochondrial outer membrane beta-barrel proteins, and acts in a late step after the SAM complex. The MDM10-MDM12-MMM1 subcomplex further acts in the TOM40-specific pathway after the action of the MDM12-MMM1 complex. Essential for establishing and maintaining the structure of mitochondria and maintenance of mtDNA nucleoids. The sequence is that of Mitochondrial distribution and morphology protein 12 from Coccidioides immitis (strain RS) (Valley fever fungus).